The following is a 305-amino-acid chain: UDP-N-acetylenolpyruvoylglucosamine reductase 2 (305 aa).

Residues 33 to 197 (VGGKADVFVA…LEARFELEEG (165 aa)) enclose the FAD-binding PCMH-type domain. Arg176 is an active-site residue. The active-site Proton donor is Ser226. The active site involves Glu296.

This sequence belongs to the MurB family. FAD serves as cofactor.

The protein resides in the cytoplasm. The enzyme catalyses UDP-N-acetyl-alpha-D-muramate + NADP(+) = UDP-N-acetyl-3-O-(1-carboxyvinyl)-alpha-D-glucosamine + NADPH + H(+). The protein operates within cell wall biogenesis; peptidoglycan biosynthesis. Functionally, cell wall formation. The polypeptide is UDP-N-acetylenolpyruvoylglucosamine reductase 2 (murB2) (Bacillus anthracis).